A 647-amino-acid polypeptide reads, in one-letter code: MGKIRKLDDQLSNLIAAGEVVERPASVVKELVENSIDANSTSIEIHLEEAGLSKIRIIDNGDGIAEEDCIVAFERHATSKIKDENDLFRIRTLGFRGEALPSIASVSELELITSTGDAPGTHLIIKGGDIIKQEKTASRKGTDITVQNLFFNTPARLKYMKTIHTELGNITDIVYRIAMSHPEVSLKLFHNEKKLLHTSGNGDVRQVLASIYSIQVAKKLVPIEAESLDFTIKGYVTLPEVTRASRNYMSTIVNGRYVRNFVLMKAIQQGYHTLLPVGRYPIGFLSIEMDPMLVDVNVHPAKLEVRFSKEQELLKLIEETLQAAFKKIQLIPDAGVTTKKKEKDESVQEQFKFEHAKPKEPSMPEIVLPTGMDEKQEEPQAVKQPAQLWQPPKQEWQPPQSLVREEQSWQPSTKSIIEEPIREEKSWNSNDEDFELEELEEEVQEIEEIEMNGNDLPPLYPIGQMHGTYIFAQNDKGLYMIDQHAAQERINYEYFRDKVGRVAQEVQELLVPYRIDLSLTEFLRVEEQLEELKKVGLFLEQFGHQSFIVRSHPTWFPKGQETEIIDEMMEQVVKLKKVDIKKLREEAAIMMSCKASIKANQYLTNDQIFALLEELRTTTNPYTCPHGRPILVHHSTYELEKMFKRVM.

This sequence belongs to the DNA mismatch repair MutL/HexB family.

Its function is as follows. This protein is involved in the repair of mismatches in DNA. It is required for dam-dependent methyl-directed DNA mismatch repair. May act as a 'molecular matchmaker', a protein that promotes the formation of a stable complex between two or more DNA-binding proteins in an ATP-dependent manner without itself being part of a final effector complex. In Bacillus cereus (strain Q1), this protein is DNA mismatch repair protein MutL.